Reading from the N-terminus, the 6713-residue chain is MGNLQTAINDKSGTLASQNFLDADEQKRNAYNQAISAAETILNKQTGPNTAKTAVEQALNNVNSAKHALNGTQNLNNAKQAAITAINGASDLNQKQKDALKAQANGAQRVSNANDVQRNATELNTAMGQLQHAIADKTNTLASSKYVNADSTKQNAYTTKVTNAEHIISGTPTVVTTPSEVTAAANQVNSAKQELNGDERLRVAKQNANTAIDALTQLNTPQKAKLKEQVGQANRLEDVQSVQTNGQSLNNAMKGLRDSIANETTVKASQNYTDASPNNQSTYNSAVSNAKGIINQTNNPTMDTSAITQATTQVNNAKNGLNGAENLRNAQNTAKQNLNTLSHLTNNQKSAISSQIDRAGHVSEVTAAKNAATELNAQMGNLEQAIHDQNTVKQGVNFTDADKAKRDAYTNAVSRAETILNKTQGANTSKQDVEAAIQNVTSAKNALNGDQNVTNAKNAAKNALNNLTSINNAQKRDLTTKIDQATTVAGVEAVSNTGTQLNTAMANLQNGINDKANTLASENYHDADSDKKTAYTQAVTNAENILNKNSGSNLDKAAVENALSQVTNAKGALNGNHNLEQAKSNANTTINGLQHLTTAQKDKLKQQVQQAQNVAGVDTVKSSANTLNGAMGTLRNSIQDNTATKNGQNYLDATERNKTNYNNAVDSANGVINATSNPNMDANAINQIATQVTSTKNALDGTHNLTQAKQTATNAIDGATNLNKAQKDALKAQVTSAQRVANVTSIQQTANELNTAMGQLQHGIDDENATKQTQKYRDAEQSKKTAYDQAVAAAKAILNKQTGSNSDKAAVDRALQQVTSTKDALNGDAKLAEAKAAARQNLGTLNHITNAQRTALEGQINQATTVDGVNTVKTNANTLDGAMNSLQGAINDKDATLRNQNYLDADESKRNAYTQAVTAAEGILNKQTGGNTSKADVDNALNAVTRAKAALNGAENLRNAKTSATNTINGLPNLTQLQKDNLKHQVEQAQNVVGVNGVKDKGNTLNTAMGALRTSIQNDNTTKTSQNYLDASDSNKNNYNTAVNNANGVINATNNPNMDANAINDMANQVNTTKAALNGAQNLAQAKTNATNTINNAQDLNQKQKDALKTQVNNAQRVSDANNVQHTATELNGAMTALKAAIADKERTKASGNYVNADQEKRQAYDSKVTNAENIINGTPNATLTVNDVNSAASQVNAAKTALNGDNNLRVAKEHANNTIDGLAQLNNVQKAKLKEQVQSATTLDGVQTVKNSSQTLNTAMKGLRDSIANEATIKAGQNYTDASPNNRNEYDSAVTAAKAIINQTSNPTMEPNTITQATSQVTTKEHALNGAQNLAQAKTTAKNNLNNLTSINNAQKDALTRNIDGATTVAGVNQETAKATELNNAMHSLQNGINDETQTKQTQKYLDAEPSKKSAYDQAVNAAKAILTKASGQNVDKAAVEQALQNVNSTKTALNGDAKLNEAKAAAKQTLGTLTHINNAQRNALDNEITQATNVEGVNTVKAKAQQLDGAMGQLETSIRDKDTTLQSQNYQDADDAKRTAYSQAVNAAATILNKTAGGNTPKADVERAMQAVTQANTALNGIQNLERAKQAANTAITNASDLNTKQKEALKAQVTSAGRVSAANGVEHTATELNTAMTALKRAIADKADTKASGNYVNADANKRQAYDEKVTAAEHIVSGTPTPTLTPSDVTNAATQVTNAKTQLNGNHNLEVAKQNANTAIDGLTSLNGPQKAKLKEQVGQATTLPNVQTVRDNAQTLNTAMKGLRDSIANEATIKAGQNYTDASQNKQNDYNNAVTAAKAIIGQTTSPSMIAQEINQAKDQVTAKQQALNGQENLRTAQTNAKQHLNGLSDLTNAQKDAAKRQIEGATHVNEVTQAQNNADALNTAMTNLKNGIQDQNTIKQGVNFTDADEAKRNAYTNAVTQAEQILNKAQGPNTAKDGVETALQNVQRAKNELNGNQNVANAKTTAKNALNNLTSINNAQKAALKSQIEGATTVAGVNQVSTMASELNTAMSNLQRGINDEAATKAAQKYTEADRDKQTAYNDAVTAAKTLLDKTAGSNDNKVAVEQALQRVNTAKTALNGDARLNEAKNTAKQQLATMSHLTNAQKANLTEQIERGTTVAGVQGIQANAGTLNQAMNQLRQSIASKDATKSSEDYQDANADLQNAYNDAVTNAEGIISATNNPEMNPDTINQKASQVNSAKSALNGDEKLAAVKQTAKSDIGRLTDLNNAQRTAANAEVDQAPNLAAVTAAKNKATSLNTAMGNLKHALAEKDNTKRSVNYTDADQPKQQAYDTAVTQAEAITNANGSNANETQVQAALNQLNQAKNDLNGDNKVAQAKETAKRALASYSNLNNAQSTAATSQIDNATTVADVTAAQNTANELNTAMGQLQNGINDQNTVKQQVNFTDADQGKKDAYTNAVTNAQGILDKANGQNMTKAQVEAALNQVTTAKNALNGDANVRQAKSDAKANLGTLTHLNNAQKQDLTSQIEGATTVNGVNSVKTKAQDLDGAMQRLESAIANKDQTKASENYIDADPTKKTAFDNAITQAESYLNKDHGTNKDKQAVEQAIQSVTSTENALNGDANLQCAKTEATQAIDNLTQLNTPQKTALKQQVNAAQRVSGVTDLKNSATSLNNAMDQLKQAIGDHDTIVAGGNYTNASPDKQGAYTDAYNAAKNIVNGSPNVITNAADVTAATQRVNNAETSLNGDTNLATAKQQAKDALRQMTHLSDAQKQSITGQIDSATQVTGVQSVKDNATNLDNAMNQLRNSIANKDEVKASQPYVDADTDKQNAYNTAVTSAENIINATSQPTLDPSAVTQAANQVNTNKTALNGAQNLANKKQETTANINRLSHLNNAQKQDLNTQVTNAPNISTVNQVKTKAEQLDQAMERLINGIQDKDQVKQSVNFTDADPEKQTAYNNAVTAAENIINQANGTNANQSQVEAALSTVTTTKQALNGDRKVTDAKNNANQTLSTLDNLNNAQKGAVTGNINQAHTVAEVTQAIQTAQELNTAMGNLKNSLNDKDTTLGSQNFADADPEKKNAYNEAVRNAENILNKSTGTNVPKDQVEAAMNQVNTTKAALNGTQNLEKAKQHANTAIDGLSHLTNAQKEALKQLVQQSTTVAEAQGNEQKANNVDAAMDKLRQSIADNATTKQNQNYTDASPNKKDAYNNAVTTAQGIIDQTTNPSLDPTVINQAAGQVSTSKNALNGNENLEAAKQQATQSLGSLDNLNNAQKQAVTNQINGAHTVDEANQIKQNAQNLNTAMGNLKQAIADKDATKATVNFTDADQAKQQAYNTAVTNAENIISKANGGNATQTEVEQAIQQVNAAKQALNGNANVQHAKDEATALINNSNDLNQAQKDALKQQVQNATTVAGVNNVKQTAQELNNAMTQLKQGIADKEQTKADGNFVNADSDKQNAYNQAVAKAEALISGTPDVVVTPSEITAALNKVTQAKNDLNGNTNLATAKQNVQHAIDQLPNLNQAQRDEYSKQITQATLVPNVNAIQQAATTLNDAMTQLKQGIANKAQIKGSENYHDADTDKQTAYDNAVTKAEELLKQTTNPTMDPNTIQQALTKVNDTNQALNGNQKLADAKQDAKTTLGTLDHLNDAQKQALTTQVEQAPDIATVNNVKQNAQNLNNAMTNLNNALQDKTETLNSINFTDADQAKKDDYTNAVSHAEGILSKANGSNASQTEVEQAMQRVNEAKQALNGNDNVQRAKDAAKQVITNANDLNQAQKDALKQQVDAAQTVANVNTIKQTAQDLNQAMTQLKQGIADKDQTKANGNFVNADTDKQNAYNNAVAHAEQIISGTPNANVDPQQVAQALQQVNQAKGDLNGNHNLQVAKDNANTAIDQLPNLNQPQKTALKDQVSHAELVTGVNAIKQNADALNNAMGTLKQQIQANSQVPQSVDFTQADQDKQQAYNNAANQAQQIANGTPTPVLAPDTVTKAVTTMNQAKDALNGDEKLAQAKQDALANLDTLRDLNQPQRDALRNQINQAQALATVEQTKQNAQNVNTAMGNLKQGIANKDTVKASENYHDADVDKQTAYTNAVSQAEGIINQTTNPTLNPDDITRALTQVTDAKNSLNGEAKLATEKQNAKDAVSGMTHLNDAQKQALKGQIDQSPEIATVNQVKQTATSLDQAMDQLSQAINDKDQILADGNYLNADPDKQNAYKQAVAKAEALLNKQSGTNEVQAQVESITNEVNAAKQALNGNDNLANAKQQAKQQLANLTHLNDAQKQSFESQITQAPLVTDVTTINQKAQTLDHAMELLRNSVADNQTTLASEDYHDATAQRQNDYNKAVTAANNIINQTTSPTMNPDDVNGATTQVNNTKVALDGDENLAAAKQQANNRLDQLDHLNNAQKQQLQSQITQSSDIAAVNGHKQTAESLNTAMGNLINAIADHQAVEQRGNFINADTDKQTAYNTAVNEAAAMINKQTGQNANQTEVEQAITKVQTTLQALNGDHNLQVAKTNATQAIDVLTSLNDPQKTALKDQVTAATLVTAVHQIEQNANTLNQAMHGLRQSIQDNAATKANSKYINEDQPEQQNYDQAVQAANNIINEQTATLDNNAINQVAATVNTTKAALHGDVKLQNDKDHAKQTVSQLAHLNNAQKHMEDTLIDSETTRTAVKQDLTEVQALDQLMDALQQSIADKDATRASSAYVNAEPNKKQAYDEAVQNAESIIAGLNNPTINKGNVSSATQAVISSKNALDGVERLAQDKQTAGNSLNHLDQLTPAQQQALENQINNATTCDKVAEIIAQAQALNEAMKALKESIKDQPQTEASSKFINEDQAQKDAYTQAVQHAKDLINKTTDPTLAKSIIDQATQAVTDAKNNLHGDQKLAQDKQRATETLNNLSNLNTPQRQALENQINNAATRGEVAQKLTEAQALNQAMEALRNSIQDQQQTESGSKFINEDKPQKDAYQAAVQNAKDLINQTGNPTLDKAQVEQLTHAFKQAKDNLHGDQKLADDKQHAVTDLNQLNGLNNPQRQALESQINNAATRGEVAQKLAEAKALDQAMQALRNSIQDQQQTEAGSKFINEDKPQKDAYQAAVQNAKDLINQTGNPTLDKSQVEQLTQAVTTAKDNLHGDQKLARDQQQAVTTVNALPNLNHAQQQTLTDAINAAPTRTEVAQHVQTATELDHAMETLKNKVDQVNTDKAQPNYTEASTDKKEAVDQALQAAQSITDPTNGSNANKDAVEQALTKLQEKVNELNGNERVAEAKTQAKQTIDQLTHLNADQIATAKQNIDQATKLQPIAELVDQATQLNQSMDQLQQAVNEHANVEQTIDYTQADSDKQKAYKQAIADAENVLKQNANKQQVDQALQNILNAKQALNGDERVALAKTNGKHDIDQLNALNNAQQDGFKGRIDQSNDLNQIQQIVDEAKALNRAMDQLSQEITGNEGRTKGSTNYVNADTQVKQVYDEAVDKAKQALDKSSGQNLTAEQVIKLNDAVTAAKKALNGEERLNNRKAEALQRLDQLTHLNNAQRQLAIQQINNAETLNKASRAINRATKLDNAMGAVQQYIDEQHLGVISSTNYINADDNLKANYDNAIANAAHELDKVQGNAIAKAEAEQLKQNIIDAQNALNGDQNLANAKDKANAFVNSLNGLNQQQQDLAHKAINNADTVSDVTDIVNNQIDLNDAMETLKHLVDNEIPNAEQTVNYQNADDNAKTNFDDAKRLANTLLNSDNTNVNDINGAIQAVNDAIHNLNGDQRLQDAKDKAIQSINQALANKLKEIEASNATDQDKLIAKNKAEELANSIINNINKATSNQAVSQVQTAGNHAIEQVHANEIPKAKIDANKDVDKQVQALIDEIDRNPNLTDKEKQALKDRINQILQQGHNDINNALTKEEIEQAKAQLAQALQDIKDLVKAKEDAKQDVDKQVQALIDEIDQNPNLTDKEKQALKDRINQILQQGHNGINNAMTKEEIEQAKAQLAQALKEIKDLVKAKENAKQDVDKQVQALIDEIDQNPNLTDKEKQALKDRINQILQQGHNDINNAMTKEEIEQAKAQLAQALQDIKDLVKAKEDAKNAIKALANAKRDQINSNPDLTPEQKAKALKEIDEAEKRALQNVENAQTIDQLNRGLNLGLDDIRNTHVWEVDEQPAVNEIFEATPEQILVNGELIVHRDDIITEQDILAHINLIDQLSAEVIDTPSTATISDSLTAKVEVTLLDGSKVIVNVPVKVVEKELSVVKQQAIESIENAAQQKIDEINNSVTLTLEQKEAAIAEVNKLKQQAIDHVNNAPDVHSVEEIQQQEQAYIEQFNPEQFTIEQAKSNAIKSIEDAIQHMIDEIKARTDLTDKEKQEAIAKLNQLKEQAIQAIQRAQSISEITEQLEQFKAQMKAANPTAKELAKRKQEAISRIKDFSNEKINSIRNSEIGTADEKQAAMNQINEIVLETIRDINNAHTLQQVEAALNNGIARISAVQIVISDRAKQSSSTGNESNSHLTIGYGTANHPFNSSTIGHKKKLDEDDDIDPLHMRHFSNNFGNVIKNAIGVVGISGLLASFWFFIAKRRRKEDEEEELEIRDNNKDSIKETLDDTKHLPLLFAKRRRKEDEEDVTVEEKDSLNNGESLDKVKHTPFFLPKRRRKEDEEDVEVTNENTDEKVLKDNEHSPLLFAKRRKDKEEDVETTTSIESKDEDVPLLLAKKKNQKDNQSKDKKSASKNTSKKVAAKKKKKKSKKNKK.

44 consecutive FIVAR domains span residues 1 to 58, 126 to 184, 252 to 310, 378 to 436, 504 to 562, 630 to 688, 756 to 814, 882 to 940, 1008 to 1066, 1134 to 1192, 1260 to 1318, 1386 to 1444, 1512 to 1570, 1638 to 1696, 1764 to 1822, 1890 to 1948, 2142 to 2200, 2268 to 2325, 2393 to 2451, 2519 to 2577, 2645 to 2703, 2771 to 2829, 2897 to 2955, 3023 to 3081, 3149 to 3207, 3275 to 3333, 3401 to 3459, 3527 to 3585, 3653 to 3711, 3779 to 3837, 3905 to 3963, 4031 to 4089, 4157 to 4218, 4283 to 4341, 4409 to 4467, 4535 to 4592, 4660 to 4718, 4786 to 4844, 4912 to 4970, 5038 to 5096, 5164 to 5222, 5290 to 5344, 5412 to 5471, and 5666 to 5722; these read MGNL…VEQA, AMGQ…VTAA, AMKG…ITQA, QMGN…VEAA, AMAN…VENA, AMGT…INQI, AMGQ…VDRA, AMNS…VDNA, AMGA…INDM, AMTA…VNSA, AMHS…VEQA, AMGQ…VERA, AMTA…VTNA, AMKG…INQA, AMTN…VETA, AMNQ…INQK, AMGN…VQAA, AMGQ…VEAA, AMQR…VEQA, AMDQ…VTAA, AMNQ…VTQA, AMER…VEAA, AMGN…VEAA, AMDK…INQA, AMGN…VEQA, AMTQ…ITAA, AMTQ…IQQA, AMTN…VEQA, AMTQ…VAQA, AMGT…VTKA, AMGN…ITRA, AMDQ…ITNE, AMEL…VNGA, AMHG…INQV, LMDA…VSSA, AMKA…IDQA, AMEA…VEQL, AMQA…VEQL, AMET…VEQA, SMDQ…VDQA, AMDQ…VIKL, and AMET…INGA. The chain crosses the membrane as a helical span at residues 6518-6540; it reads VIKNAIGVVGISGLLASFWFFIA. The interval 6616–6713 is disordered; sequence RRKEDEEDVE…KKKKSKKNKK (98 aa). Basic and acidic residues-rich tracts occupy residues 6631-6641 and 6680-6690; these read TDEKVLKDNEH and QKDNQSKDKKS. The span at 6695 to 6713 shows a compositional bias: basic residues; it reads TSKKVAAKKKKKKSKKNKK.

The protein localises to the cell membrane. In Staphylococcus aureus (strain Mu3 / ATCC 700698), this protein is Extracellular matrix-binding protein EbhA (ebhA).